Reading from the N-terminus, the 116-residue chain is Large ribosomal subunit protein bL19 (116 aa).

The protein belongs to the bacterial ribosomal protein bL19 family.

Functionally, this protein is located at the 30S-50S ribosomal subunit interface and may play a role in the structure and function of the aminoacyl-tRNA binding site. The sequence is that of Large ribosomal subunit protein bL19 from Histophilus somni (strain 129Pt) (Haemophilus somnus).